The primary structure comprises 163 residues: Nitrogen regulatory protein (163 aa).

One can recognise a PTS EIIA type-2 domain in the interval 12–156 (SVLNRECTRS…EELYQIITDT (145 aa)). Residue His-73 is the Tele-phosphohistidine intermediate of the active site.

Its subcellular location is the cytoplasm. Functionally, seems to have a role in regulating nitrogen assimilation. This Escherichia coli (strain K12) protein is Nitrogen regulatory protein (ptsN).